Reading from the N-terminus, the 650-residue chain is Primary amine oxidase 1 (650 aa).

Residues 1–19 (MNTSILAILFLIQCVFTLG) form the signal peptide. Asn-2, Asn-34, Asn-62, and Asn-149 each carry an N-linked (GlcNAc...) asparagine glycan. A disulfide bridge connects residues Cys-155 and Cys-176. Asn-235 carries an N-linked (GlcNAc...) asparagine glycan. 308 to 319 (FMDIGEFGFGRS) is a substrate binding site. Residue Asp-310 is the Proton acceptor of the active site. An intrachain disulfide couples Cys-329 to Cys-355. 395-400 (LGNYDY) is a substrate binding site. The Schiff-base intermediate with substrate; via topaquinone role is filled by Tyr-398. Tyr-398 carries the post-translational modification 2',4',5'-topaquinone. Cu cation contacts are provided by His-453 and His-455. Mn(2+)-binding residues include Asp-462 and Asp-464. N-linked (GlcNAc...) asparagine glycosylation occurs at Asn-486. Mn(2+) is bound by residues Asp-607 and Ile-608. His-618 contacts Cu cation.

The protein belongs to the copper/topaquinone oxidase family. As to quaternary structure, homodimer. L-topaquinone is required as a cofactor. Cu cation serves as cofactor. The cofactor is Zn(2+). It depends on Mn(2+) as a cofactor. Post-translationally, topaquinone (TPQ) is generated by copper-dependent autoxidation of a specific tyrosyl residue. In terms of tissue distribution, expressed in the vascular tissues at the division/differentiation transition zone.

Its subcellular location is the secreted. The catalysed reaction is a primary methyl amine + O2 + H2O = an aldehyde + H2O2 + NH4(+). Its activity is regulated as follows. Repressed by semi-carbazide, a specific and irreversible inhibitor of copper amine oxidases. Functionally, oxidizes preferentially the aliphatic diamine putrescine with production of the corresponding aldehyde, ammonia and hydrogen peroxide. May be involved in the regulation of developmental programmed cell death (PCD) in both vascular tissue and the root cap. Required for jasmonic acid-(MeJA) mediated early protoxylem differentiation associated with putrescine levels reduction and H(2)O(2) accumulation in roots. This is Primary amine oxidase 1 from Arabidopsis thaliana (Mouse-ear cress).